The sequence spans 170 residues: Adenine phosphoribosyltransferase (170 aa).

Belongs to the purine/pyrimidine phosphoribosyltransferase family. As to quaternary structure, homodimer.

The protein localises to the cytoplasm. The enzyme catalyses AMP + diphosphate = 5-phospho-alpha-D-ribose 1-diphosphate + adenine. It participates in purine metabolism; AMP biosynthesis via salvage pathway; AMP from adenine: step 1/1. In terms of biological role, catalyzes a salvage reaction resulting in the formation of AMP, that is energically less costly than de novo synthesis. In Brevibacillus brevis (strain 47 / JCM 6285 / NBRC 100599), this protein is Adenine phosphoribosyltransferase.